The chain runs to 295 residues: tRNA-cytidine(32) 2-sulfurtransferase (295 aa).

The PP-loop motif motif lies at 59–64 (SGGKDS). Residues Cys-134, Cys-137, and Cys-225 each coordinate [4Fe-4S] cluster.

The protein belongs to the TtcA family. As to quaternary structure, homodimer. Mg(2+) serves as cofactor. It depends on [4Fe-4S] cluster as a cofactor.

It is found in the cytoplasm. The enzyme catalyses cytidine(32) in tRNA + S-sulfanyl-L-cysteinyl-[cysteine desulfurase] + AH2 + ATP = 2-thiocytidine(32) in tRNA + L-cysteinyl-[cysteine desulfurase] + A + AMP + diphosphate + H(+). It functions in the pathway tRNA modification. Its function is as follows. Catalyzes the ATP-dependent 2-thiolation of cytidine in position 32 of tRNA, to form 2-thiocytidine (s(2)C32). The sulfur atoms are provided by the cysteine/cysteine desulfurase (IscS) system. This chain is tRNA-cytidine(32) 2-sulfurtransferase, found in Ruegeria sp. (strain TM1040) (Silicibacter sp.).